We begin with the raw amino-acid sequence, 132 residues long: Small ribosomal subunit protein eS24 (132 aa).

A compositionally biased stretch (basic and acidic residues) spans 90-100; the sequence is RLAKHGLYEKK. The segment at 90–132 is disordered; sequence RLAKHGLYEKKKTSRKQRKERKNRMKKVRGTAKANVGAGKKKD. Over residues 101–119 the composition is skewed to basic residues; that stretch reads KTSRKQRKERKNRMKKVRG.

It belongs to the eukaryotic ribosomal protein eS24 family. In terms of assembly, component of the small ribosomal subunit. Part of the small subunit (SSU) processome, composed of more than 70 proteins and the RNA chaperone small nucleolar RNA (snoRNA) U3.

It is found in the cytoplasm. It localises to the nucleus. The protein localises to the nucleolus. Its function is as follows. Component of the small ribosomal subunit. The ribosome is a large ribonucleoprotein complex responsible for the synthesis of proteins in the cell. Required for processing of pre-rRNA and maturation of 40S ribosomal subunits. Part of the small subunit (SSU) processome, first precursor of the small eukaryotic ribosomal subunit. During the assembly of the SSU processome in the nucleolus, many ribosome biogenesis factors, an RNA chaperone and ribosomal proteins associate with the nascent pre-rRNA and work in concert to generate RNA folding, modifications, rearrangements and cleavage as well as targeted degradation of pre-ribosomal RNA by the RNA exosome. The chain is Small ribosomal subunit protein eS24 (rps24) from Xenopus laevis (African clawed frog).